The sequence spans 345 residues: Alpha-2-HS-glycoprotein (345 aa).

The first 18 residues, 1-18, serve as a signal peptide directing secretion; sequence MKSLVLLLCFAQLWGCQS. The Cystatin fetuin-A-type 1 domain occupies 19–133; that stretch reads APQGTGLGFR…QFRVMHTQCH (115 aa). Intrachain disulfides connect C32–C336, C89–C100, C114–C132, C146–C149, C208–C219, and C230–C247. Residue N99 is glycosylated (N-linked (GlcNAc...) asparagine). The residue at position 134 (S134) is a Phosphoserine. At T135 the chain carries Phosphothreonine. S138 carries the phosphoserine modification. The Cystatin fetuin-A-type 2 domain maps to 144-250; the sequence is KLCPRCPLLT…EEVSVACKLF (107 aa). N-linked (GlcNAc...) asparagine glycans are attached at residues N156 and N176. S305, S309, S312, and S314 each carry phosphoserine. The disordered stretch occupies residues 312–334; sequence SASGETLHSPKVGQPGAAGPVSP.

Belongs to the fetuin family. Phosphorylated by FAM20C in the extracellular medium. In terms of tissue distribution, liver is the major site of synthesis, but fetuin is also expressed in limb buds and other extrahepatic tissues during development.

It localises to the secreted. In terms of biological role, probably involved in differentiation. (Microbial infection) Facilitates invasion of hepatocytes by Plasmodium berghei sporozoites. The polypeptide is Alpha-2-HS-glycoprotein (Ahsg) (Mus musculus (Mouse)).